We begin with the raw amino-acid sequence, 316 residues long: tRNA dimethylallyltransferase (316 aa).

An ATP-binding site is contributed by 14–21; that stretch reads GPTAVGKT. 16–21 contacts substrate; that stretch reads TAVGKT. An interaction with substrate tRNA region spans residues 39–42; sequence DSMQ.

The protein belongs to the IPP transferase family. As to quaternary structure, monomer. It depends on Mg(2+) as a cofactor.

The enzyme catalyses adenosine(37) in tRNA + dimethylallyl diphosphate = N(6)-dimethylallyladenosine(37) in tRNA + diphosphate. Catalyzes the transfer of a dimethylallyl group onto the adenine at position 37 in tRNAs that read codons beginning with uridine, leading to the formation of N6-(dimethylallyl)adenosine (i(6)A). This chain is tRNA dimethylallyltransferase, found in Bacillus cytotoxicus (strain DSM 22905 / CIP 110041 / 391-98 / NVH 391-98).